Here is a 190-residue protein sequence, read N- to C-terminus: dTTP/UTP pyrophosphatase (190 aa).

Aspartate 68 (proton acceptor) is an active-site residue.

Belongs to the Maf family. YhdE subfamily. A divalent metal cation is required as a cofactor.

It localises to the cytoplasm. It catalyses the reaction dTTP + H2O = dTMP + diphosphate + H(+). It carries out the reaction UTP + H2O = UMP + diphosphate + H(+). Its function is as follows. Nucleoside triphosphate pyrophosphatase that hydrolyzes dTTP and UTP. May have a dual role in cell division arrest and in preventing the incorporation of modified nucleotides into cellular nucleic acids. The polypeptide is dTTP/UTP pyrophosphatase (Pyrococcus furiosus (strain ATCC 43587 / DSM 3638 / JCM 8422 / Vc1)).